We begin with the raw amino-acid sequence, 494 residues long: Probable cytosol aminopeptidase (494 aa).

2 residues coordinate Mn(2+): Lys-260 and Asp-265. Lys-272 is an active-site residue. Mn(2+)-binding residues include Asp-283, Asp-342, and Glu-344. Arg-346 is a catalytic residue.

Belongs to the peptidase M17 family. It depends on Mn(2+) as a cofactor.

The protein resides in the cytoplasm. It carries out the reaction Release of an N-terminal amino acid, Xaa-|-Yaa-, in which Xaa is preferably Leu, but may be other amino acids including Pro although not Arg or Lys, and Yaa may be Pro. Amino acid amides and methyl esters are also readily hydrolyzed, but rates on arylamides are exceedingly low.. The enzyme catalyses Release of an N-terminal amino acid, preferentially leucine, but not glutamic or aspartic acids.. Presumably involved in the processing and regular turnover of intracellular proteins. Catalyzes the removal of unsubstituted N-terminal amino acids from various peptides. The chain is Probable cytosol aminopeptidase from Bacillus mycoides (strain KBAB4) (Bacillus weihenstephanensis).